A 349-amino-acid chain; its full sequence is Protein O-mannose kinase (349 aa).

The Cytoplasmic portion of the chain corresponds to 1–19; it reads MGQQHGTRNGLTHRELPRG. Residues 20–42 form a helical; Signal-anchor for type II membrane protein membrane-spanning segment; sequence VGLLLAMALMNVALYLCLDQLFI. At 43-349 the chain is on the lumenal side; sequence SPGRSTADSR…TVMSQTKEML (307 aa). Residues Asn-66, Asn-164, and Asn-219 are each glycosylated (N-linked (GlcNAc...) asparagine). In terms of domain architecture, Protein kinase spans 80 to 349; it reads VRQLKRVGEG…TVMSQTKEML (270 aa).

The protein belongs to the protein kinase superfamily. Ser/Thr protein kinase family. STKL subfamily.

Its subcellular location is the endoplasmic reticulum membrane. The catalysed reaction is 3-O-[beta-D-GalNAc-(1-&gt;3)-beta-D-GlcNAc-(1-&gt;4)-alpha-D-Man]-L-Thr-[protein] + ATP = 3-O-[beta-D-GalNAc-(1-&gt;3)-beta-D-GlcNAc-(1-&gt;4)-(O-6-P-alpha-D-Man)]-Thr-[protein] + ADP + H(+). Functionally, protein O-mannose kinase that specifically mediates phosphorylation at the 6-position of an O-mannose of the trisaccharide (N-acetylgalactosamine (GalNAc)-beta-1,3-N-acetylglucosamine (GlcNAc)-beta-1,4-mannose) to generate phosphorylated O-mannosyl trisaccharide (N-acetylgalactosamine-beta-1,3-N-acetylglucosamine-beta-1,4-(phosphate-6-)mannose). Phosphorylated O-mannosyl trisaccharide is a carbohydrate structure present in alpha-dystroglycan (DAG1), which is required for binding laminin G-like domain-containing extracellular proteins with high affinity. Only shows kinase activity when the GalNAc-beta-3-GlcNAc-beta-terminus is linked to the 4-position of O-mannose, suggesting that this disaccharide serves as the substrate recognition motif. The polypeptide is Protein O-mannose kinase (Pomk) (Mus musculus (Mouse)).